Consider the following 208-residue polypeptide: Adenylyl-sulfate kinase 3 (208 aa).

ATP is bound at residue Gly37 to Thr45. Substrate is bound by residues Asp67, Arg70, Arg84, Asn87, Ile110–Ser111, and Gly160. Ser111 functions as the Phosphoserine intermediate in the catalytic mechanism.

The protein belongs to the APS kinase family. As to expression, expressed in root vasculature, root tips, leaf epidermal and guard cells, pollen grains and radicle of immature seeds.

It localises to the cytoplasm. Its subcellular location is the cytosol. The catalysed reaction is adenosine 5'-phosphosulfate + ATP = 3'-phosphoadenylyl sulfate + ADP + H(+). It participates in sulfur metabolism; hydrogen sulfide biosynthesis; sulfite from sulfate: step 2/3. Functionally, catalyzes the synthesis of activated sulfate for the sulfation of secondary metabolites, including the glucosinolates. Essential for plant reproduction and viability. This chain is Adenylyl-sulfate kinase 3, found in Arabidopsis thaliana (Mouse-ear cress).